The following is a 1085-amino-acid chain: DNA mismatch repair protein MutS (1085 aa).

A disordered region spans residues 533 to 564 (DEDLFGEEEQNAPPVGSSNHAVGTQPSADDEA). Polar residues predominate over residues 548-559 (GSSNHAVGTQPS). Residue 812 to 819 (GPNMSGKS) participates in ATP binding. The tract at residues 997-1042 (ERRAPRSAPPTVPARGDDRRSAGRASSSGAGAARGEQGRTLPDGQL) is disordered. Over residues 1019–1031 (GRASSSGAGAARG) the composition is skewed to low complexity.

Belongs to the DNA mismatch repair MutS family.

Functionally, this protein is involved in the repair of mismatches in DNA. It is possible that it carries out the mismatch recognition step. This protein has a weak ATPase activity. The protein is DNA mismatch repair protein MutS of Roseiflexus sp. (strain RS-1).